The sequence spans 371 residues: F-box protein At2g41170 (371 aa).

The 47-residue stretch at 56–102 folds into the F-box domain; it reads KMSLLDLPDLTLDCILEKLSPSELCAMTSVCSELRDKCVSDHLWEKH.

The sequence is that of F-box protein At2g41170 from Arabidopsis thaliana (Mouse-ear cress).